The chain runs to 610 residues: Elongation factor 4 (610 aa).

In terms of domain architecture, tr-type G spans 11 to 193 (ENIRNFSIIA…QIVEKVPAPS (183 aa)). GTP-binding positions include 23–28 (DHGKST) and 140–143 (NKID).

The protein belongs to the TRAFAC class translation factor GTPase superfamily. Classic translation factor GTPase family. LepA subfamily.

It localises to the cell membrane. The enzyme catalyses GTP + H2O = GDP + phosphate + H(+). Required for accurate and efficient protein synthesis under certain stress conditions. May act as a fidelity factor of the translation reaction, by catalyzing a one-codon backward translocation of tRNAs on improperly translocated ribosomes. Back-translocation proceeds from a post-translocation (POST) complex to a pre-translocation (PRE) complex, thus giving elongation factor G a second chance to translocate the tRNAs correctly. Binds to ribosomes in a GTP-dependent manner. The sequence is that of Elongation factor 4 from Streptococcus equi subsp. zooepidemicus (strain MGCS10565).